Reading from the N-terminus, the 570-residue chain is Grayanic acid biosynthesis cluster cytochrome P450 monooxygenase (570 aa).

A helical membrane pass occupies residues 9–29 (ILTIFWLPIAAAXLYGAGLAI). N-linked (GlcNAc...) asparagine glycosylation is present at Asn191. Cys510 contributes to the heme binding site.

The protein belongs to the cytochrome P450 family. It depends on heme as a cofactor.

It localises to the membrane. Its pathway is secondary metabolite biosynthesis. Functionally, non-reducing polyketide synthase; part of the gene cluster that mediates the biosynthesis of orcinol depsidone grayanic acid (GRA), the only major secondary metabolite known in C.grayi. The first step consists in the ring and depside synthesis by PKS16 leading to 4-O-demethylsphaerophorin, involving different orcinol-like rings, one with acetyl CoA and the other with octanoyl CoA as the starter. Further depsidone formation by the GRA cluster-specific cytochrome P450 leads to 4-O-demethylgrayanic acid. Finally, the cluster specific O-methyltransferase probably converts the 4-O-demethylgrayanic acid into grayanic acid. This Cladonia grayi (Gray's cup lichen) protein is Grayanic acid biosynthesis cluster cytochrome P450 monooxygenase.